The primary structure comprises 380 residues: MSNKPLRIGIVAGELSGDTLGEGFIKAIKAVHPDAEFVGIGGPKMIALGCQSLFDMEELAVMGLVEVLGRLPRLLKVKAELVRYFTENPPDVFVGIDAPDFNLRLELDLKNAGIKTVHYVSPSVWAWRQKRIFKIAKATHLVLAFLPFEKAFYDKFNVPCEFIGHTLADAIPLESDKAPARELLGLEQDKQWLAVLPGSRGSELKMLSQPFIETCKKLQQAFPELGFVVALVNQKRREQFEQAWKEYAPELDFKLVDDTARNVITASDAVMLASGTVALECMLLKRPMVVGYRVNAVTAFLAKRLLKTQYVSLPNILADTELVKEYLQDDCTPDNLFGEVSRLLEGDNHQMLDKFTEMHHWIRKDADQQAANAVLKLIEK.

The protein belongs to the LpxB family.

It carries out the reaction a lipid X + a UDP-2-N,3-O-bis[(3R)-3-hydroxyacyl]-alpha-D-glucosamine = a lipid A disaccharide + UDP + H(+). It participates in bacterial outer membrane biogenesis; LPS lipid A biosynthesis. Condensation of UDP-2,3-diacylglucosamine and 2,3-diacylglucosamine-1-phosphate to form lipid A disaccharide, a precursor of lipid A, a phosphorylated glycolipid that anchors the lipopolysaccharide to the outer membrane of the cell. The sequence is that of Lipid-A-disaccharide synthase from Vibrio vulnificus (strain CMCP6).